The following is a 1425-amino-acid chain: Zinc finger FYVE domain-containing protein 9 (1425 aa).

2 disordered regions span residues 201–255 and 291–352; these read ESTE…IGRD and EDLT…SGRN. Residues 202–225 are compositionally biased toward basic and acidic residues; that stretch reads STEKDMNSEKQMDPLNRPKTEGRS. Polar residues-rich tracts occupy residues 230 to 245 and 296 to 312; these read CPTS…SPSQ and KISS…SFSH. Phosphoserine is present on residues S306 and S668. Residues 699-758 form an FYVE-type zinc finger; sequence DSQAPNCMKCEARFTFTKRRHHCRACGKVFCASCCSLKCKLLYMDRKEARVCVICHSVLM. 8 residues coordinate Zn(2+): C705, C708, C721, C724, C729, C732, C750, and C753. The SBD stretch occupies residues 767 to 823; sequence MSASSQSPNPNNPAEYCSTIPPLQQAQASGALSSPPPTVMVPVGVLKHPGAEVAQPR.

In terms of assembly, interacts (via the SBD region) with SMAD2; the interaction recruits SMAD2 to the TGF-beta receptor and is disrupted by phosphorylation of SMAD2 upon TGF-beta receptor activation. Interacts with SMAD3. Interacts with TGFBR1 and TGFBR2; the interaction recruits SMAD2 to the TGF-beta receptor. Interacts with PML. Ubiquitous. In the brain found primarily in the cerebrovascular smooth muscle cells and reactive astrocytes.

It is found in the cytoplasm. The protein resides in the early endosome membrane. Early endosomal protein that functions to recruit SMAD2/SMAD3 to intracellular membranes and to the TGF-beta receptor. Plays a significant role in TGF-mediated signaling by regulating the subcellular location of SMAD2 and SMAD3 and modulating the transcriptional activity of the SMAD3/SMAD4 complex. Possibly associated with TGF-beta receptor internalization. This is Zinc finger FYVE domain-containing protein 9 (ZFYVE9) from Homo sapiens (Human).